The chain runs to 370 residues: Peptidyl-prolyl cis-trans isomerase D (370 aa).

The 166-residue stretch at F11–E176 folds into the PPIase cyclophilin-type domain. TPR repeat units follow at residues V218 to Y251, L269 to D302, and T307 to D340.

Belongs to the cyclophilin-type PPIase family. PPIase D subfamily.

It is found in the cytoplasm. It carries out the reaction [protein]-peptidylproline (omega=180) = [protein]-peptidylproline (omega=0). Its function is as follows. PPIases accelerate the folding of proteins. It catalyzes the cis-trans isomerization of proline imidic peptide bonds in oligopeptides. This chain is Peptidyl-prolyl cis-trans isomerase D (CPR6), found in Debaryomyces hansenii (strain ATCC 36239 / CBS 767 / BCRC 21394 / JCM 1990 / NBRC 0083 / IGC 2968) (Yeast).